Here is a 779-residue protein sequence, read N- to C-terminus: Probable ATP-dependent RNA helicase DHX40 (779 aa).

Residues 1 to 28 (MSRFPAVAGRAPRRQEEGERSRDLQEER) are disordered. The segment covering 13–28 (RRQEEGERSRDLQEER) has biased composition (basic and acidic residues). The 169-residue stretch at 63–231 (IQAVRDNSFL…FGNCPIFDIP (169 aa)) folds into the Helicase ATP-binding domain. An ATP-binding site is contributed by 76–83 (GNTGSGKT). The DEAH box signature appears at 173–176 (DEAH). In terms of domain architecture, Helicase C-terminal spans 263–442 (TMDIHLNEMA…SVVLTLKCLA (180 aa)). Residues 737–779 (SKDVLKKMQRRNDDKSISDARARFLERKQQRTQDHSDTRKETG) are disordered.

This sequence belongs to the DEAD box helicase family. DEAH subfamily. Ubiquitously expressed.

The catalysed reaction is ATP + H2O = ADP + phosphate + H(+). Its function is as follows. Probable ATP-dependent RNA helicase. The chain is Probable ATP-dependent RNA helicase DHX40 (DHX40) from Homo sapiens (Human).